A 372-amino-acid chain; its full sequence is Putative isochorismate synthase MenF (372 aa).

Catalysis depends on Lys-119, which acts as the Proton acceptor. Residue Glu-175 is the Proton donor of the active site. Positions 219 and 356 each coordinate Mg(2+).

The protein belongs to the isochorismate synthase family. Mg(2+) serves as cofactor.

The enzyme catalyses chorismate = isochorismate. It participates in quinol/quinone metabolism; 1,4-dihydroxy-2-naphthoate biosynthesis; 1,4-dihydroxy-2-naphthoate from chorismate: step 1/7. Its pathway is quinol/quinone metabolism; menaquinone biosynthesis. Functionally, catalyzes the conversion of chorismate to isochorismate. The polypeptide is Putative isochorismate synthase MenF (menF) (Mycobacterium tuberculosis (strain CDC 1551 / Oshkosh)).